The primary structure comprises 153 residues: Endoribonuclease YbeY (153 aa).

Residues H114, H118, and H124 each coordinate Zn(2+).

It belongs to the endoribonuclease YbeY family. Zn(2+) is required as a cofactor.

It is found in the cytoplasm. Its function is as follows. Single strand-specific metallo-endoribonuclease involved in late-stage 70S ribosome quality control and in maturation of the 3' terminus of the 16S rRNA. This Shewanella baltica (strain OS195) protein is Endoribonuclease YbeY.